Here is a 131-residue protein sequence, read N- to C-terminus: Ribosome-binding factor A (131 aa).

It belongs to the RbfA family. In terms of assembly, monomer. Binds 30S ribosomal subunits, but not 50S ribosomal subunits or 70S ribosomes.

It is found in the cytoplasm. Functionally, one of several proteins that assist in the late maturation steps of the functional core of the 30S ribosomal subunit. Associates with free 30S ribosomal subunits (but not with 30S subunits that are part of 70S ribosomes or polysomes). Required for efficient processing of 16S rRNA. May interact with the 5'-terminal helix region of 16S rRNA. This chain is Ribosome-binding factor A, found in Pseudomonas fluorescens (strain SBW25).